Here is a 529-residue protein sequence, read N- to C-terminus: Bifunctional purine biosynthesis protein PurH (529 aa).

The region spanning Met1–Val148 is the MGS-like domain.

This sequence belongs to the PurH family.

The catalysed reaction is (6R)-10-formyltetrahydrofolate + 5-amino-1-(5-phospho-beta-D-ribosyl)imidazole-4-carboxamide = 5-formamido-1-(5-phospho-D-ribosyl)imidazole-4-carboxamide + (6S)-5,6,7,8-tetrahydrofolate. It catalyses the reaction IMP + H2O = 5-formamido-1-(5-phospho-D-ribosyl)imidazole-4-carboxamide. It functions in the pathway purine metabolism; IMP biosynthesis via de novo pathway; 5-formamido-1-(5-phospho-D-ribosyl)imidazole-4-carboxamide from 5-amino-1-(5-phospho-D-ribosyl)imidazole-4-carboxamide (10-formyl THF route): step 1/1. It participates in purine metabolism; IMP biosynthesis via de novo pathway; IMP from 5-formamido-1-(5-phospho-D-ribosyl)imidazole-4-carboxamide: step 1/1. The protein is Bifunctional purine biosynthesis protein PurH of Yersinia pseudotuberculosis serotype O:1b (strain IP 31758).